We begin with the raw amino-acid sequence, 594 residues long: Type IV inositol polyphosphate 5-phosphatase 7 (594 aa).

Residues 246-300 (FRCGHRPSDYSRRPSDYSRPSDYYSRPSNYSRPSDVSRWGSSDDDNGPGDSPSTF) form a disordered region. Basic and acidic residues predominate over residues 251 to 261 (RPSDYSRRPSD). The span at 262 to 279 (YSRPSDYYSRPSNYSRPS) shows a compositional bias: low complexity. Catalytic stretches follow at residues 435 to 450 (DRVI…IALS) and 515 to 530 (KRRT…WHGE).

This sequence belongs to the inositol polyphosphate 5-phosphatase family. As to expression, broadly expressed in emerging organs. Mostly localized in procambium of growing organs. Restricted to vascular differentiating cells of young organs.

It localises to the nucleus. The protein resides in the cell membrane. It catalyses the reaction a 1,2-diacyl-sn-glycero-3-phospho-(1D-myo-inositol-4,5-bisphosphate) + H2O = a 1,2-diacyl-sn-glycero-3-phospho-(1D-myo-inositol 4-phosphate) + phosphate. It carries out the reaction a 1,2-diacyl-sn-glycero-3-phospho-(1D-myo-inositol-3,4,5-trisphosphate) + H2O = a 1,2-diacyl-sn-glycero-3-phospho-(1D-myo-inositol-3,4-bisphosphate) + phosphate. Functionally, has phosphatase activity toward PtdIns(4,5)P2 and at a lower extent toward PtdIns(3,4,5)P3 but not toward Ins(1,4,5)P3. Acts redundantly with CVP2 for maintaining vascular continuity. Regulates phosphoinositide-dependent VAN3 localization. Functions in salt stress response by regulating reactive oxygen species (ROS) production and stress-responsive genes expression. This is Type IV inositol polyphosphate 5-phosphatase 7 from Arabidopsis thaliana (Mouse-ear cress).